The chain runs to 501 residues: ATP synthase subunit alpha (501 aa).

169-176 contributes to the ATP binding site; sequence GDRQTGKT.

This sequence belongs to the ATPase alpha/beta chains family. In terms of assembly, F-type ATPases have 2 components, CF(1) - the catalytic core - and CF(0) - the membrane proton channel. CF(1) has five subunits: alpha(3), beta(3), gamma(1), delta(1), epsilon(1). CF(0) has three main subunits: a(1), b(2) and c(9-12). The alpha and beta chains form an alternating ring which encloses part of the gamma chain. CF(1) is attached to CF(0) by a central stalk formed by the gamma and epsilon chains, while a peripheral stalk is formed by the delta and b chains.

It localises to the cell membrane. It catalyses the reaction ATP + H2O + 4 H(+)(in) = ADP + phosphate + 5 H(+)(out). In terms of biological role, produces ATP from ADP in the presence of a proton gradient across the membrane. The alpha chain is a regulatory subunit. The protein is ATP synthase subunit alpha of Streptococcus agalactiae serotype Ia (strain ATCC 27591 / A909 / CDC SS700).